A 92-amino-acid polypeptide reads, in one-letter code: RNA-binding protein Hfq (92 aa).

Residues 9–68 (DPFLNALRRERVPVSIYLVNGIKLQGQVESFDQFVILLKNTVSQMVYKHAISTVVPSRPF) form the Sm domain.

This sequence belongs to the Hfq family. In terms of assembly, homohexamer.

In terms of biological role, RNA chaperone that binds small regulatory RNA (sRNAs) and mRNAs to facilitate mRNA translational regulation in response to envelope stress, environmental stress and changes in metabolite concentrations. Also binds with high specificity to tRNAs. In Shewanella piezotolerans (strain WP3 / JCM 13877), this protein is RNA-binding protein Hfq.